A 252-amino-acid polypeptide reads, in one-letter code: H-2 class II histocompatibility antigen, A-F beta chain (252 aa).

A signal peptide spans 1-16 (AAVVVLMVLSSPGTEG). The beta-1 stretch occupies residues 17-109 (GNSERHFVSQ…VETPTSLRRL (93 aa)). Residues 17–213 (GNSERHFVSQ…RAQSESARSK (197 aa)) are Extracellular-facing. 2 disulfide bridges follow: cysteine 31/cysteine 93 and cysteine 132/cysteine 188. A glycan (N-linked (GlcNAc...) asparagine) is linked at asparagine 35. Residues 110 to 203 (EQPNVVISLS…SLKSPITVEW (94 aa)) form a beta-2 region. One can recognise an Ig-like C1-type domain in the interval 112-200 (PNVVISLSRT…EHPSLKSPIT (89 aa)). Positions 204–213 (RAQSESARSK) are connecting peptide. A helical transmembrane segment spans residues 214–234 (MLSGIGGCVLGVIFLGLGLFI). Topologically, residues 235-252 (RYRSQKGPRGPPPAGLLQ) are cytoplasmic.

This sequence belongs to the MHC class II family. Post-translationally, ubiquitinated in immature dendritic cells leading to down-regulation of MHC class II.

Its subcellular location is the membrane. This is H-2 class II histocompatibility antigen, A-F beta chain (H2-Ab1) from Mus musculus (Mouse).